We begin with the raw amino-acid sequence, 104 residues long: uncharacterized protein (104 aa).

Positions 1–18 (MGVEGMWNVFLFSLQVAA) are cleaved as a signal peptide. A glycan (N-linked (GlcNAc...) asparagine; by host) is linked at Asn27.

This is an uncharacterized protein from Fowl adenovirus A serotype 1 (strain CELO / Phelps) (FAdV-1).